Consider the following 290-residue polypeptide: Inositol monophosphatase 2 (290 aa).

Residues E83, D103, I105, and D106 each coordinate Mg(2+). E83 is a substrate binding site. Substrate contacts are provided by residues 105–108 (IDGT), 207–209 (GSS), Q226, and D233. D233 serves as a coordination point for Mg(2+).

The protein belongs to the inositol monophosphatase superfamily. As to quaternary structure, homodimer. The cofactor is Mg(2+). As to expression, mostly expressed in brain, small intestine, heart, kidney, and spleen (at protein level).

It localises to the cytoplasm. The enzyme catalyses a myo-inositol phosphate + H2O = myo-inositol + phosphate. It carries out the reaction 1D-myo-inositol 1-phosphate + H2O = myo-inositol + phosphate. The catalysed reaction is 1D-myo-inositol 2-phosphate + H2O = myo-inositol + phosphate. It catalyses the reaction 1D-myo-inositol 3-phosphate + H2O = myo-inositol + phosphate. The enzyme catalyses 1D-myo-inositol 4-phosphate + H2O = myo-inositol + phosphate. It carries out the reaction 1D-myo-inositol 5-phosphate + H2O = myo-inositol + phosphate. The catalysed reaction is 1D-myo-inositol 6-phosphate + H2O = myo-inositol + phosphate. It catalyses the reaction alpha-D-glucose 1-phosphate + H2O = D-glucose + phosphate. The enzyme catalyses glycerol 2-phosphate + H2O = glycerol + phosphate. It carries out the reaction adenosine 2'-phosphate + H2O = adenosine + phosphate. It participates in polyol metabolism; myo-inositol biosynthesis; myo-inositol from D-glucose 6-phosphate: step 2/2. Phosphatase that can use myo-inositol monophosphates, myo-inositol 1,4-diphosphate, scyllo-inositol-1,4-diphosphate, glucose-1-phosphate, beta-glycerophosphate and 2'-AMP as substrates in vitro. No physiological substrates has been described yet. Has been implicated as the pharmacological target for lithium Li(+) action in brain. The protein is Inositol monophosphatase 2 of Mus musculus (Mouse).